Consider the following 116-residue polypeptide: Large ribosomal subunit protein bL17 (116 aa).

The protein belongs to the bacterial ribosomal protein bL17 family. Part of the 50S ribosomal subunit. Contacts protein L32.

The protein is Large ribosomal subunit protein bL17 of Prochlorococcus marinus subsp. pastoris (strain CCMP1986 / NIES-2087 / MED4).